Reading from the N-terminus, the 624-residue chain is uncharacterized protein (624 aa).

The signal sequence occupies residues 1–29; it reads MRFHRQGTAATVGVLLIVLLGFCWKLSES. N-linked (GlcNAc...) asparagine glycosylation is found at asparagine 68, asparagine 150, asparagine 219, asparagine 366, asparagine 441, asparagine 447, asparagine 464, and asparagine 528. The disordered stretch occupies residues 141 to 174; that stretch reads LERRHGRFGNGTHGDHPKGPPPPPPPDEKDRGSQ.

The protein localises to the secreted. This is an uncharacterized protein from Saccharomyces cerevisiae (strain ATCC 204508 / S288c) (Baker's yeast).